Reading from the N-terminus, the 465-residue chain is Sodium-dependent phosphate transport protein 1 (465 aa).

2 N-linked (GlcNAc...) asparagine glycosylation sites follow: asparagine 47 and asparagine 56. 10 helical membrane passes run 79–99 (GIIF…VGYI), 109–129 (IGFA…AAAV), 171–191 (MSLS…GIIC), 198–218 (MVFY…FVLY), 255–275 (AMIK…YLWT), 304–324 (LPYL…DFLM), 337–357 (LFTA…LYLS), 363–383 (TITF…GALI), 399–419 (VTTL…GLFL), and 428–448 (FKIF…YLIF).

It belongs to the major facilitator superfamily. Sodium/anion cotransporter family. As to quaternary structure, interacts with PDZK1. As to expression, kidney cortex and liver.

The protein localises to the apical cell membrane. It carries out the reaction 3 Na(+)(out) + phosphate(out) = 3 Na(+)(in) + phosphate(in). The enzyme catalyses urate(out) = urate(in). Important for the resorption of phosphate by the kidney. May be involved in actively transporting phosphate into cells via Na(+) cotransport in the renal brush border membrane. Plays a role in urate transport in the kidney. The chain is Sodium-dependent phosphate transport protein 1 (SLC17A1) from Oryctolagus cuniculus (Rabbit).